Reading from the N-terminus, the 281-residue chain is Bifunctional protein FolD (281 aa).

NADP(+) contacts are provided by residues 165 to 167 (GRS) and serine 190.

It belongs to the tetrahydrofolate dehydrogenase/cyclohydrolase family. In terms of assembly, homodimer.

The catalysed reaction is (6R)-5,10-methylene-5,6,7,8-tetrahydrofolate + NADP(+) = (6R)-5,10-methenyltetrahydrofolate + NADPH. It catalyses the reaction (6R)-5,10-methenyltetrahydrofolate + H2O = (6R)-10-formyltetrahydrofolate + H(+). It functions in the pathway one-carbon metabolism; tetrahydrofolate interconversion. Its function is as follows. Catalyzes the oxidation of 5,10-methylenetetrahydrofolate to 5,10-methenyltetrahydrofolate and then the hydrolysis of 5,10-methenyltetrahydrofolate to 10-formyltetrahydrofolate. The protein is Bifunctional protein FolD of Polaromonas naphthalenivorans (strain CJ2).